We begin with the raw amino-acid sequence, 311 residues long: Cadmium, cobalt and zinc/H(+)-K(+) antiporter (311 aa).

The Extracellular segment spans residues 1–12; the sequence is MGHNHNEGANKK. The chain crosses the membrane as a helical span at residues 13-33; that stretch reads VLLISFIMITGYMIIEAIGGF. The Cytoplasmic segment spans residues 34-43; it reads LTNSLALLSD. A helical membrane pass occupies residues 44–64; sequence AGHMLSDSISLMVALIAFTLA. Residues 65–78 are Extracellular-facing; sequence EKKANHNKTFGYKR. Residues 79-99 traverse the membrane as a helical segment; it reads FEILAAVINGAALILISLYII. Over 100 to 115 the chain is Cytoplasmic; that stretch reads YEAIERFSNPPKVATT. A helical membrane pass occupies residues 116 to 136; that stretch reads GMLTISIIGLVVNLLVAWIMM. Over 137–157 the chain is Extracellular; the sequence is SGGDTKNNLNIRGAYLHVISD. The helical transmembrane segment at 158 to 178 threads the bilayer; sequence MLGSVGAILAAILIIFFGWGW. Residues 179 to 311 lie on the Cytoplasmic side of the membrane; the sequence is ADPLASIIVA…MEKQRDHHHH (133 aa).

The protein belongs to the cation diffusion facilitator (CDF) transporter (TC 2.A.4) family. SLC30A subfamily.

It localises to the cell membrane. In terms of biological role, involved in divalent cation and potassium homeostasis in the cell. Catalyzes the active efflux of zinc, cadmium and cobalt, in exchange for potassium and H(+) ions. This is Cadmium, cobalt and zinc/H(+)-K(+) antiporter (czcD) from Bacillus subtilis (strain 168).